Here is a 523-residue protein sequence, read N- to C-terminus: MLDKLSKHKTMFYERVKEIDQILFSQQQAKQTQLDNLSNNNASGGFFSGFMKMFSPLSTPPNSSSNNNSNTQQAISQETRKLCSVNNNRHEPIYNQYTTNSQVIRSFPAVSSIGQSSTNMYNSVNICDGISSSEKRSPTPPRNRSNSNDKILFGHYDALGSLPQNNMGHYQQPPQQSSQQQQQPLVPKQNSVTALRNTTSATSSTTTANNKKPSLDQIPELKGVDRKLLDHILNEVIETKTTNWDDIAGLKDAKQTLLETVILPSIRPDLFNGLRAPCRGILLFGPPGTGKTMIARACASQCNATFFSISAGSLVSKYHGEGEKLVRCLFAAARYLQPSVIFIDEIDSILSARSSEEHEASRRMKTEFMIQMDGVSNMNGKEDRVLVMGATNIPTELDEAILRRFTKRIYIPLPDHAARASLIKQLSHGQNMSLSETDINKICVATEGFSGSDLTALCKETSMVPLREISMDQLISIDARKIRPIVLKDFQSSLVHVRPSTSQDTIKKLEKWNESYGTFAKGI.

The Cytoplasmic segment spans residues 1-41 (MLDKLSKHKTMFYERVKEIDQILFSQQQAKQTQLDNLSNNN). An intramembrane region (helical) is located at residues 42–58 (ASGGFFSGFMKMFSPLS). 3 stretches are compositionally biased toward low complexity: residues 57–71 (LSTP…NSNT), 171–184 (QQPP…QQQP), and 193–210 (TALR…TANN). Disordered regions lie at residues 57 to 77 (LSTP…AISQ) and 129 to 218 (GISS…LDQI). Residues 59–523 (TPPNSSSNNN…ESYGTFAKGI (465 aa)) lie on the Cytoplasmic side of the membrane.

Belongs to the AAA ATPase family. Spastin subfamily. Homohexamer. The homohexamer is stabilized by ATP-binding. The homohexamer may adopt a ring conformation through which microtubules pass prior to being severed.

It is found in the membrane. It catalyses the reaction n ATP + n H2O + a microtubule = n ADP + n phosphate + (n+1) alpha/beta tubulin heterodimers.. Its function is as follows. ATP-dependent microtubule severing protein. Stimulates microtubule minus-end depolymerization and poleward microtubule flux in the mitotic spindle. The protein is Spastin of Naegleria gruberi (Amoeba).